We begin with the raw amino-acid sequence, 421 residues long: Type II methyltransferase M.SfiI (421 aa).

This sequence belongs to the N(4)/N(6)-methyltransferase family. N(4) subfamily.

The enzyme catalyses a 2'-deoxycytidine in DNA + S-adenosyl-L-methionine = an N(4)-methyl-2'-deoxycytidine in DNA + S-adenosyl-L-homocysteine + H(+). In terms of biological role, a beta subtype methylase, recognizes the double-stranded sequence 5'-GGCCNNNNNGGCC-3', methylates C-? on both strands, and protects the DNA from cleavage by the SfiI endonuclease. The polypeptide is Type II methyltransferase M.SfiI (Streptomyces fimbriatus).